The following is a 242-amino-acid chain: Protein FsrB (242 aa).

The next 5 helical transmembrane spans lie at 29–49 (LTVY…SVLF), 52–72 (LSET…AGGW), 78–95 (WLCR…PFVL), 100–120 (VSLP…LFYW), and 160–180 (KIAS…LPVT).

It belongs to the AgrB family.

The protein localises to the cell membrane. Its function is as follows. May be involved in the proteolytic processing of a quorum sensing system signal molecule precursor required for the regulation of the virulence genes for gelatinase (gelE) and a serine protease (sprE). The polypeptide is Protein FsrB (fsrB) (Enterococcus faecalis (strain ATCC 47077 / OG1RF)).